The following is a 386-amino-acid chain: Porin PorA (386 aa).

The signal sequence occupies residues 1–35 (MKRTLGHALIIIGAALIVIAVLLPTFLVPRLRVIP). The segment covering 53 to 63 (DSSQLGKNEPT) has biased composition (polar residues). A disordered region spans residues 53–78 (DSSQLGKNEPTPNRKNDPRCKAETDE). Basic and acidic residues predominate over residues 64–78 (PNRKNDPRCKAETDE).

It belongs to the PorA family.

It localises to the secreted. The protein localises to the cell wall. In terms of biological role, forms water-filled channels that favor the permeation of cations. This Corynebacterium amycolatum protein is Porin PorA.